An 829-amino-acid chain; its full sequence is Protein Jade-1 (829 aa).

Positions 1–10 (MKRSRVPSTS) are enriched in polar residues. Residues 1 to 40 (MKRSRVPSTSEDSDNGSNSTSWSQHSNSKHRKQSGKRPSE) are disordered. Residues 15–26 (NGSNSTSWSQHS) are compositionally biased toward low complexity. The segment at 196–246 (DVVCDVCQSPDGEDGNEMVFCDKCNICVHQACYGILKVPEGSWLCRTCALG) adopts a PHD-type 1 zinc-finger fold. A C2HC pre-PHD-type zinc finger spans residues 248–282 (FPKCHLCPKKGGAMKPTRSGTKWVHVSCALWIPEV). The segment at 306–362 (LICCLCKEKTGACIQCSAKSCRVAFHVTCGLHCGLKMNTILTEADEVKFKSFCPKHS) adopts a PHD-type 2 zinc-finger fold. Disordered regions lie at residues 368–408 (EEEG…PEET), 556–651 (PPVP…RRKS), and 697–829 (ATAP…VLAS). Residues 374–390 (DRPVKVPTREDRSRNRG) are compositionally biased toward basic and acidic residues. 3 stretches are compositionally biased toward polar residues: residues 394-405 (SASSQTRLSQNP), 570-586 (GQNSTLSSSEKGSNSYR), and 607-619 (SGDSVRSETVMSA). Basic and acidic residues predominate over residues 622-648 (RRSEGRTRSGESHRKEEESERPLEDRR). Positions 697–714 (ATAPNMYSGSPRKTNASH) are enriched in polar residues. Residues 738–754 (KRSERTSAGRQTERQEA) are compositionally biased toward basic and acidic residues. Over residues 762–774 (SSLKTFSTSPSSP) the composition is skewed to low complexity. Residues 782–792 (TGSENRRHLEE) are compositionally biased toward basic and acidic residues.

The protein belongs to the JADE family. In terms of assembly, component of the HBO1 complex composed.

Its subcellular location is the nucleus. The protein localises to the chromosome. It localises to the cytoplasm. The protein resides in the cytoskeleton. It is found in the cilium basal body. Its function is as follows. Scaffold subunit of some HBO1 complexes, which have a histone H4 acetyltransferase activity. Plays a key role in HBO1 complex by directing KAT7/HBO1 specificity towards histone H4 acetylation (H4K5ac, H4K8ac and H4K12ac), regulating DNA replication initiation, regulating DNA replication initiation. The sequence is that of Protein Jade-1 (jade1) from Danio rerio (Zebrafish).